Here is a 399-residue protein sequence, read N- to C-terminus: Chorismate synthase (399 aa).

Arginine 40 and arginine 46 together coordinate NADP(+). FMN is bound by residues 129–131 (RSS), 257–258 (QA), glycine 302, 317–321 (KPISS), and arginine 343.

Belongs to the chorismate synthase family. As to quaternary structure, homotetramer. It depends on FMNH2 as a cofactor.

It catalyses the reaction 5-O-(1-carboxyvinyl)-3-phosphoshikimate = chorismate + phosphate. Its pathway is metabolic intermediate biosynthesis; chorismate biosynthesis; chorismate from D-erythrose 4-phosphate and phosphoenolpyruvate: step 7/7. Catalyzes the anti-1,4-elimination of the C-3 phosphate and the C-6 proR hydrogen from 5-enolpyruvylshikimate-3-phosphate (EPSP) to yield chorismate, which is the branch point compound that serves as the starting substrate for the three terminal pathways of aromatic amino acid biosynthesis. This reaction introduces a second double bond into the aromatic ring system. This is Chorismate synthase from Chlorobium chlorochromatii (strain CaD3).